A 316-amino-acid polypeptide reads, in one-letter code: Adenine deaminase (316 aa).

Positions 14, 16, and 194 each coordinate Zn(2+). Glutamate 197 serves as the catalytic Proton donor. Aspartate 275 serves as a coordination point for Zn(2+). Aspartate 276 is a binding site for substrate.

Belongs to the metallo-dependent hydrolases superfamily. Adenosine and AMP deaminases family. Adenine deaminase type 2 subfamily. Zn(2+) serves as cofactor.

The enzyme catalyses adenine + H2O + H(+) = hypoxanthine + NH4(+). Functionally, catalyzes the hydrolytic deamination of adenine to hypoxanthine. Plays an important role in the purine salvage pathway and in nitrogen catabolism. In Pseudomonas entomophila (strain L48), this protein is Adenine deaminase.